Reading from the N-terminus, the 270-residue chain is Maximins-S type D (270 aa).

The first 18 residues, 1 to 18 (MNFNYFILVLFFITSGHA), serve as a signal peptide directing secretion. 2 propeptides span residues 19–35 (KSETREVHQEAENHIKR) and 52–65 (SAEEQNLAEHLVTR). Asparagine amide is present on asparagine 83. A propeptide spanning residues 87 to 100 (SAEEQDLAEDLVTR) is cleaved from the precursor. Lysine amide is present on lysine 118. The propeptide occupies 122-135 (SAEDQDLAEDLVTR). At asparagine 153 the chain carries Asparagine amide. Residues 157–170 (SAEEQDLAEHLVTR) constitute a propeptide that is removed on maturation. Asparagine 188 carries the post-translational modification Asparagine amide. A propeptide spanning residues 192–205 (SAEEQDLVEDLVTR) is cleaved from the precursor. Residue lysine 223 is modified to Lysine amide. The propeptide occupies 227–240 (SAEEQDLAEDLVTR). Residue lysine 258 is modified to Lysine amide. Residues 262–270 (SAEQEKDMK) constitute a propeptide that is removed on maturation.

Belongs to the maximin-S family. In terms of tissue distribution, expressed by the skin dorsal glands.

Its subcellular location is the secreted. Functionally, maximin-S1 has no antimicrobial activity. Has no hemolytic activity. Maximin-S2 has an activity against mycoplasma but has no activity against common Gram-positive and Gram-negative bacteria nor fungi. Has no hemolytic activity. In terms of biological role, maximin-S3 has an activity against mycoplasma but has no activity against common Gram-positive and Gram-negative bacteria nor fungi. Has no hemolytic activity. Its function is as follows. Maximin-S4 has an activity against mycoplasma but has no activity against common Gram-positive and Gram-negative bacteria nor fungi. Has no hemolytic activity. Functionally, maximin-S5 has an activity against mycoplasma but has no activity against common Gram-positive and Gram-negative bacteria nor fungi. Has no hemolytic activity. In Bombina maxima (Giant fire-bellied toad), this protein is Maximins-S type D.